Reading from the N-terminus, the 299-residue chain is Bifunctional protein FolD (299 aa).

NADP(+)-binding positions include 168–170 (GRS), Ser-193, and Ile-234.

It belongs to the tetrahydrofolate dehydrogenase/cyclohydrolase family. As to quaternary structure, homodimer.

The enzyme catalyses (6R)-5,10-methylene-5,6,7,8-tetrahydrofolate + NADP(+) = (6R)-5,10-methenyltetrahydrofolate + NADPH. It catalyses the reaction (6R)-5,10-methenyltetrahydrofolate + H2O = (6R)-10-formyltetrahydrofolate + H(+). It participates in one-carbon metabolism; tetrahydrofolate interconversion. Catalyzes the oxidation of 5,10-methylenetetrahydrofolate to 5,10-methenyltetrahydrofolate and then the hydrolysis of 5,10-methenyltetrahydrofolate to 10-formyltetrahydrofolate. In Bartonella quintana (strain Toulouse) (Rochalimaea quintana), this protein is Bifunctional protein FolD.